Reading from the N-terminus, the 807-residue chain is Leucine--tRNA ligase (807 aa).

The 'HIGH' region signature appears at 40–51 (PYPSGTGLHVGH). The short motif at 576-580 (KMSKS) is the 'KMSKS' region element. Position 579 (lysine 579) interacts with ATP.

Belongs to the class-I aminoacyl-tRNA synthetase family.

Its subcellular location is the cytoplasm. The catalysed reaction is tRNA(Leu) + L-leucine + ATP = L-leucyl-tRNA(Leu) + AMP + diphosphate. The chain is Leucine--tRNA ligase from Pelodictyon phaeoclathratiforme (strain DSM 5477 / BU-1).